The following is a 706-amino-acid chain: MAHVRNKKSDDKKAMVVAKEDTNKSESEGVTKLQTYLKTIPIAKKKFAKLPKRKKSPTSAELLLIDPRYSASKEGPLGLGPIVLPFVQRFNNIDGFMTLYVAAVLIHGALFAVVDMTLNIYQVQFSLTRTEWYLMDFSDYIASFVVAIIIAHFGSKGNRTRWIAASCILMGLESMLFAFPFFTYEIIIPGRQSIELCMEENEKRNIICGNSVPNRSKCIYFHIAGQCIHGIAGMPIYILGITFIFDHIPTSSCGFYLAIGHSAYLIGYLLGMVGGLQNFQPPPKEKTVEIEPAKVYQLLQSGWWKTFLIIAAISFCVSFMMVCFPTSLPGAHKLRLAKRKEPPTIDRRLKDMKIQPHLKGFLHNIWHILKNPLMLTQAICKVSEYLTFNTSLYFLPHHLQTQFLITPGIASLLTGAFVLPGGIIGHFLGGLIVDRLEMTNKNKLKFTLVTTVVSVGLFLLIFFVECQTTTFAGINEDYDGYGQLGNLTADCNEYCDCTTSLYTSICGRDEKEYFSPCFAGCKATKVSQTEKTYYNCSCIKEGLAASDDEGQFIDAIAGTCDSDCLKLPLFFAFYFSATVFSNMCSIPVISIILQSVPANFTSLSLGVTYAIVKFVASVPAPLLFRLSSAIACIYWDNNRCGGKERCWIYNKNILVYEFMGIWMSSQLIIVLLNIYAIQIHDVVVHGEITESKTTVKDVKEQKERKA.

Residues Met-1–Lys-24 are disordered. Topologically, residues Met-1 to Asp-94 are cytoplasmic. The segment covering Lys-7–Lys-24 has biased composition (basic and acidic residues). Residues Gly-95–Leu-118 traverse the membrane as a helical segment. Topologically, residues Asn-119–Thr-130 are extracellular. The helical transmembrane segment at Glu-131 to Ala-151 threads the bilayer. The Cytoplasmic segment spans residues His-152–Arg-159. A helical membrane pass occupies residues Thr-160–Pro-180. Over Phe-181 to Cys-218 the chain is Extracellular. The N-linked (GlcNAc...) asparagine glycan is linked to Asn-214. Residues Ile-219–Ile-241 form a helical membrane-spanning segment. Residues Thr-242 to Cys-253 are Cytoplasmic-facing. A helical membrane pass occupies residues Gly-254–Gln-277. At Asn-278–Ser-301 the chain is on the extracellular side. A helical transmembrane segment spans residues Gly-302–Phe-324. Residues Pro-325–Met-374 are Cytoplasmic-facing. Residues Leu-375–Pro-396 form a helical membrane-spanning segment. Topologically, residues His-397–Ala-410 are extracellular. The helical transmembrane segment at Ser-411 to Ile-432 threads the bilayer. Topologically, residues Val-433–Lys-445 are cytoplasmic. A helical transmembrane segment spans residues Phe-446–Cys-466. The Extracellular portion of the chain corresponds to Gln-467–Leu-565. A Kazal-like domain is found at Gly-485–Lys-540. Asn-486 carries N-linked (GlcNAc...) asparagine glycosylation. 3 cysteine pairs are disulfide-bonded: Cys-491–Cys-521, Cys-497–Cys-517, and Cys-506–Cys-538. Asn-535 carries an N-linked (GlcNAc...) asparagine glycan. The chain crosses the membrane as a helical span at residues Lys-566 to Ile-589. The Cytoplasmic portion of the chain corresponds to Ser-590–Ser-604. A helical transmembrane segment spans residues Leu-605–Phe-624. The Extracellular segment spans residues Arg-625–Asn-652. The chain crosses the membrane as a helical span at residues Ile-653–Tyr-675. Residues Ala-676–Ala-706 are Cytoplasmic-facing.

It belongs to the organo anion transporter (TC 2.A.60) family. In terms of assembly, component of the CatSper complex or CatSpermasome composed of the core pore-forming members CATSPER1, CATSPER2, CATSPER3 and CATSPER4 as well as auxiliary members CATSPERB, CATSPERG2, CATSPERD, CATSPERE, CATSPERZ, C2CD6/CATSPERT, SLCO6C1, TMEM249, TMEM262 and EFCAB9. HSPA1 may be an additional auxiliary complex member. The core complex members CATSPER1, CATSPER2, CATSPER3 and CATSPER4 form a heterotetrameric channel. The auxiliary CATSPERB, CATSPERG2, CATSPERD and CATSPERE subunits form a pavilion-like structure over the pore which stabilizes the complex through interactions with CATSPER4, CATSPER3, CATSPER1 and CATSPER2 respectively. SLCO6C1 interacts with CATSPERE and TMEM262/CATSPERH interacts with CATSPERB, further stabilizing the complex. C2CD6/CATSPERT interacts at least with CATSPERD and is required for targeting the CatSper complex in the flagellar membrane.

The protein localises to the cell projection. It is found in the cilium. The protein resides in the flagellum membrane. In terms of biological role, auxiliary component of the CatSper complex, a complex involved in sperm cell hyperactivation. This chain is Solute carrier organic anion transporter family member 6C1, found in Mus musculus (Mouse).